The primary structure comprises 304 residues: 2-oxoacid:ferredoxin oxidoreductase 2, subunit beta (304 aa).

[4Fe-4S] cluster-binding residues include Cys12, Cys15, and Cys46. Thiamine diphosphate-binding positions include 44 to 47 (IGCS) and His65. Residue Asp90 coordinates Mg(2+). 91–92 (GD) contributes to the thiamine diphosphate binding site. The Mg(2+) site is built by Asn118 and Val120. Thiamine diphosphate is bound at residue 122-123 (GL). Residue Cys197 coordinates [4Fe-4S] cluster.

In terms of assembly, heterodimer composed of an alpha and a beta subunit. The cofactor is [4Fe-4S] cluster. Requires thiamine diphosphate as cofactor. Mg(2+) serves as cofactor.

It catalyses the reaction a 2-oxocarboxylate + 2 oxidized [2Fe-2S]-[ferredoxin] + CoA = an acyl-CoA + 2 reduced [2Fe-2S]-[ferredoxin] + CO2 + H(+). Functionally, catalyzes the coenzyme A-dependent oxidative decarboxylation of different 2-oxoacids such as 2-oxoglutarate, pyruvate and 2-oxobutyrate to form their CoA derivatives. This chain is 2-oxoacid:ferredoxin oxidoreductase 2, subunit beta, found in Sulfurisphaera tokodaii (strain DSM 16993 / JCM 10545 / NBRC 100140 / 7) (Sulfolobus tokodaii).